The chain runs to 623 residues: Actin-related protein 8 (623 aa).

Over residues 1-24 (MTQTDRDAENGRDREKDREKEQQR) the composition is skewed to basic and acidic residues. A disordered region spans residues 1-29 (MTQTDRDAENGRDREKDREKEQQRGVKRP). 283 to 286 (DVGD) is a binding site for ATP. A compositionally biased stretch (low complexity) spans 428-438 (TQSKQDQSSKA). A disordered region spans residues 428-458 (TQSKQDQSSKASADRKSFPKPSSFEGESSVC).

Belongs to the actin family. ARP8 subfamily. Component of the chromatin remodeling INO80 complex; specifically part of a complex module associated with the DBINO domain of INO80. Exists as monomers and dimers, but the dimer is most probably the biologically relevant form required for stable interactions with histones that exploits the twofold symmetry of the nucleosome core.

The protein localises to the nucleus. Its subcellular location is the chromosome. In terms of biological role, plays an important role in the functional organization of mitotic chromosomes. Exhibits low basal ATPase activity, and unable to polymerize. Functionally, proposed core component of the chromatin remodeling INO80 complex which is involved in transcriptional regulation, DNA replication and probably DNA repair. Required for the recruitment of INO80 (and probably the INO80 complex) to sites of DNA damage Strongly prefer nucleosomes and H3-H4 tetramers over H2A-H2B dimers, suggesting it may act as a nucleosome recognition module within the complex. In Danio rerio (Zebrafish), this protein is Actin-related protein 8 (actr8).